The primary structure comprises 81 residues: Acyl carrier protein (81 aa).

Residues 2–80 (ASEQEILSGL…DAVAYISQAQ (79 aa)) enclose the Carrier domain. S40 is modified (O-(pantetheine 4'-phosphoryl)serine).

Belongs to the acyl carrier protein (ACP) family. In terms of processing, 4'-phosphopantetheine is transferred from CoA to a specific serine of apo-ACP by AcpS. This modification is essential for activity because fatty acids are bound in thioester linkage to the sulfhydryl of the prosthetic group.

The protein resides in the cytoplasm. It participates in lipid metabolism; fatty acid biosynthesis. Functionally, carrier of the growing fatty acid chain in fatty acid biosynthesis. The protein is Acyl carrier protein of Kineococcus radiotolerans (strain ATCC BAA-149 / DSM 14245 / SRS30216).